A 469-amino-acid chain; its full sequence is Solute carrier family 52, riboflavin transporter, member 3 (469 aa).

Topologically, residues 1–6 (MALLTH) are cytoplasmic. A helical transmembrane segment spans residues 7–27 (LLVCTFGMGSWVAINGLWVEL). Residues 28–43 (PLLVTELPEGWYLPSY) lie on the Extracellular side of the membrane. Residues 44–64 (LTMVIQLANIGPLLVTLLHHF) form a helical membrane-spanning segment. Residues 65-71 (QPSCLSE) are Cytoplasmic-facing. A helical transmembrane segment spans residues 72-92 (VPIIFTVLAVGTVACALFAFL). Residues 93–105 (WNVTSWVLDGRHS) are Extracellular-facing. N-linked (GlcNAc...) asparagine glycosylation is present at Asn-94. Residues 106 to 126 (IAFMVLTFFLALVDCTSSVTF) form a helical membrane-spanning segment. The Cytoplasmic portion of the chain corresponds to 127 to 137 (LPFMSRLPACY). The chain crosses the membrane as a helical span at residues 138 to 158 (LTTFFVGEGLSSLLPALVALA). Over 159–220 (QGSGLTTCVN…SRYLPANFSP (62 aa)) the chain is Extracellular. The N-linked (GlcNAc...) asparagine glycan is linked to Asn-168. The helical transmembrane segment at 221 to 241 (LVFFLLLSFMMACCLAAFFLL) threads the bilayer. Topologically, residues 242 to 297 (QRQPRPRESSIEDLLTSQVTLHSIRPREGDDLGPPDPGPSSKAQGLPEEKTASDHP) are cytoplasmic. Ser-251 bears the Phosphoserine mark. Residues 266-290 (RPREGDDLGPPDPGPSSKAQGLPEE) form a disordered region. The chain crosses the membrane as a helical span at residues 298 to 318 (AHLAFIYVLVAFVNALTNGVL). The Extracellular segment spans residues 319–335 (PSVQTYSCLSYGPVAYH). Residues 336–356 (LSATLSSMANPLACFLSMFLP) form a helical membrane-spanning segment. The Cytoplasmic portion of the chain corresponds to 357–361 (HRSLP). Residues 362–382 (FLGVLTVLGTGFGAYNMAMAV) traverse the membrane as a helical segment. Topologically, residues 383 to 396 (MSPCPLMQGHWAGE) are extracellular. A helical transmembrane segment spans residues 397–417 (ILIVASWVLFIGCLSYVKVML). The Cytoplasmic segment spans residues 418-427 (GVILRDRSRS). The chain crosses the membrane as a helical span at residues 428–448 (ALVWCGAAVQLGSLLGALLMF). The Extracellular segment spans residues 449-469 (PLVNVLRLFSSADFCSLQCSA).

This sequence belongs to the riboflavin transporter family.

The protein localises to the cell membrane. It catalyses the reaction riboflavin(in) = riboflavin(out). Plasma membrane transporter mediating the uptake by cells of the water soluble vitamin B2/riboflavin that plays a key role in biochemical oxidation-reduction reactions of the carbohydrate, lipid, and amino acid metabolism. This is Solute carrier family 52, riboflavin transporter, member 3 (SLC52A3) from Ailuropoda melanoleuca (Giant panda).